Here is a 35-residue protein sequence, read N- to C-terminus: Photosystem II reaction center protein T (35 aa).

The helical transmembrane segment at 3–23 (ALVYTFLLVGTLGIIFFAIFF) threads the bilayer.

The protein belongs to the PsbT family. As to quaternary structure, PSII is composed of 1 copy each of membrane proteins PsbA, PsbB, PsbC, PsbD, PsbE, PsbF, PsbH, PsbI, PsbJ, PsbK, PsbL, PsbM, PsbT, PsbY, PsbZ, Psb30/Ycf12, at least 3 peripheral proteins of the oxygen-evolving complex and a large number of cofactors. It forms dimeric complexes.

It localises to the plastid. It is found in the chloroplast thylakoid membrane. Its function is as follows. Found at the monomer-monomer interface of the photosystem II (PS II) dimer, plays a role in assembly and dimerization of PSII. PSII is a light-driven water plastoquinone oxidoreductase, using light energy to abstract electrons from H(2)O, generating a proton gradient subsequently used for ATP formation. The polypeptide is Photosystem II reaction center protein T (Chara vulgaris (Common stonewort)).